The chain runs to 751 residues: Probable alpha-galactosidase C (751 aa).

The N-terminal stretch at 1 to 27 (MFGSPKRAALAAASLLAIFGNGPSVMA) is a signal peptide. N49, N57, N162, N186, N194, N366, N433, N452, and N500 each carry an N-linked (GlcNAc...) asparagine glycan. Catalysis depends on D510, which acts as the Nucleophile. Residue D572 is the Proton donor of the active site. N-linked (GlcNAc...) asparagine glycosylation is present at N720.

It belongs to the glycosyl hydrolase 36 family. As to quaternary structure, homotetramer. Mg(2+) is required as a cofactor. NAD(+) serves as cofactor.

It localises to the secreted. The enzyme catalyses Hydrolysis of terminal, non-reducing alpha-D-galactose residues in alpha-D-galactosides, including galactose oligosaccharides, galactomannans and galactolipids.. Hydrolyzes a variety of simple alpha-D-galactoside as well as more complex molecules such as oligosaccharides and polysaccharides. The polypeptide is Probable alpha-galactosidase C (aglC) (Aspergillus flavus (strain ATCC 200026 / FGSC A1120 / IAM 13836 / NRRL 3357 / JCM 12722 / SRRC 167)).